The chain runs to 77 residues: UPF0291 protein YnzC (77 aa).

Residues 56–77 (DPEGNDVTPEKLKREQRNNKLH) are disordered. Residues 63–77 (TPEKLKREQRNNKLH) are compositionally biased toward basic and acidic residues.

The protein belongs to the UPF0291 family.

The protein resides in the cytoplasm. This is UPF0291 protein YnzC (ynzC) from Bacillus subtilis (strain 168).